The chain runs to 505 residues: Sucrose porin (505 aa).

Positions 1-22 (MYRKSTLAMLIALLTSAASAHA) are cleaved as a signal peptide. Residues 44–87 (ENRAQTAENRAGAAEKKVQQLTAQQQKNQNSTQEVAQRTARLEK) form a disordered region. Positions 62 to 72 (QQLTAQQQKNQ) are enriched in low complexity.

It belongs to the porin LamB (TC 1.B.3) family. As to quaternary structure, homotrimer.

The protein resides in the cell outer membrane. Porin for sucrose uptake. This Salmonella typhimurium protein is Sucrose porin (scrY).